Here is a 783-residue protein sequence, read N- to C-terminus: BMP/retinoic acid-inducible neural-specific protein 2 (783 aa).

The first 33 residues, 1–33 (MRWPCSSWFRGLWPEAAPWAVLLALGVPGWVLA), serve as a signal peptide directing secretion. The region spanning 85-281 (RYRIYREFAR…FVAAALSYIT (197 aa)) is the MACPF domain. Asparagine 185, asparagine 354, asparagine 473, asparagine 579, asparagine 626, and asparagine 658 each carry an N-linked (GlcNAc...) asparagine glycan.

It belongs to the BRINP family. As to expression, weakly expressed in embryonic stem (ES) cells. Strongly expressed in ES-derived neural stem cells (NSCs).

It localises to the secreted. Functionally, inhibits neuronal cell proliferation by negative regulation of the cell cycle transition. This chain is BMP/retinoic acid-inducible neural-specific protein 2 (Brinp2), found in Mus musculus (Mouse).